We begin with the raw amino-acid sequence, 552 residues long: Probable protein kinase UbiB (552 aa).

The Protein kinase domain occupies 121 to 504; sequence HFDTVPLASA…QGLQRRVVNA (384 aa). ATP contacts are provided by residues 127–135 and K149; that span reads LASASISQV. D284 serves as the catalytic Proton acceptor. The next 2 helical transmembrane spans lie at 501–521 and 526–546; these read VVNAIVGSGLLVAAAVLYGLH and YLGAIPVWSLISGCVGALALF.

Belongs to the ABC1 family. UbiB subfamily.

It is found in the cell inner membrane. It participates in cofactor biosynthesis; ubiquinone biosynthesis [regulation]. Is probably a protein kinase regulator of UbiI activity which is involved in aerobic coenzyme Q (ubiquinone) biosynthesis. In Xylella fastidiosa (strain 9a5c), this protein is Probable protein kinase UbiB.